A 403-amino-acid polypeptide reads, in one-letter code: Tryptophan synthase beta chain (403 aa).

N6-(pyridoxal phosphate)lysine is present on K93.

Belongs to the TrpB family. As to quaternary structure, tetramer of two alpha and two beta chains. It depends on pyridoxal 5'-phosphate as a cofactor.

The enzyme catalyses (1S,2R)-1-C-(indol-3-yl)glycerol 3-phosphate + L-serine = D-glyceraldehyde 3-phosphate + L-tryptophan + H2O. It participates in amino-acid biosynthesis; L-tryptophan biosynthesis; L-tryptophan from chorismate: step 5/5. Its function is as follows. The beta subunit is responsible for the synthesis of L-tryptophan from indole and L-serine. This is Tryptophan synthase beta chain from Acinetobacter baylyi (strain ATCC 33305 / BD413 / ADP1).